The primary structure comprises 432 residues: Small ribosomal subunit protein uS5m (432 aa).

A disordered region spans residues 110-130 (AGARKGRGKRTKKKKRKDLNR). Over residues 113 to 127 (RKGRGKRTKKKKRKD) the composition is skewed to basic residues. The S5 DRBM domain maps to 220 to 284 (FDTRILEVRN…NRAIHYLHYI (65 aa)).

Belongs to the universal ribosomal protein uS5 family. As to quaternary structure, component of the mitochondrial ribosome small subunit (28S) which comprises a 12S rRNA and about 30 distinct proteins.

It localises to the mitochondrion. The protein is Small ribosomal subunit protein uS5m (Mrps5) of Mus musculus (Mouse).